A 549-amino-acid polypeptide reads, in one-letter code: MEFAELIKTPRVDNVVLHRPFYPAVEGTLCLTGHHLILSSRQDNTEELWLLHSNIDAIDKRFVGPLGTIIIKCKDFRIIQLDIPGMEECLNIASSIEALSTLDSITLMYPFFYRPMFEVIEDGWHSFLPEQEFELYSSTISEWRLSYVNKEFSVCPSYPPAVIVPKAIDDDALRKVATFRHGGRFPVLSYYHKKNGMVIMRSGQPLTGTNGRRCKEDEKLINATLRAGKRGYIIDTRPLNIAQQARAKGGGFEQEAHYPQWRRIHKSIDRYHILQESLIKLVESCNDQTQNMDRWLSKLEASNWLTHIKEILTTACLAAQCLDREGASILIHGTEGTDSTLQVTSLAQIILEPRSRTIRGFEALIEREWLQAGHPFQQRCAQSAYCNSKQKWESPVFLLFLDCVWQILRQFPCSFEFNENFLIMLFEHAYASQFGTFLGNNESERCKLKLQQKTMSLWSWVNRPSELSKFTNPLFEANNLVIWPSVAPQSLQLWEGIFLRWNRSSKYLDEAYEEMVNIIEYNKELQAKVNLLRRQLAELETEDGVQESP.

Residue M1 is modified to N-acetylmethionine. The GRAM domain maps to 4–99 (AELIKTPRVD…LNIASSIEAL (96 aa)). The Myotubularin phosphatase domain occupies 123 to 498 (GWHSFLPEQE…QSLQLWEGIF (376 aa)). Residues 508-542 (LDEAYEEMVNIIEYNKELQAKVNLLRRQLAELETE) adopt a coiled-coil conformation. Phosphoserine is present on S548.

It belongs to the protein-tyrosine phosphatase family. Non-receptor class myotubularin subfamily. As to quaternary structure, homodimer. Heterodimer (via C-terminus) with lipid phosphatase MTMR6 (via C-terminus). Heterodimer (via coiled coil domain) with lipid phosphatase MTMR7 (via C-terminus). Heterodimer with lipid phosphatase MTMR8.

It localises to the cytoplasm. Its subcellular location is the cell projection. It is found in the ruffle membrane. The protein resides in the perinuclear region. The protein localises to the endoplasmic reticulum. Its function is as follows. Acts as an adapter for myotubularin-related phosphatases. Increases lipid phosphatase MTMR6 catalytic activity, specifically towards phosphatidylinositol 3,5-bisphosphate, and MTMR6 binding affinity for phosphorylated phosphatidylinositols. Positively regulates lipid phosphatase MTMR7 catalytic activity. Increases MTMR8 catalytic activity towards phosphatidylinositol 3-phosphate. The formation of the MTMR6-MTMR9 complex, stabilizes both MTMR6 and MTMR9 protein levels. Stabilizes MTMR8 protein levels. Plays a role in the late stages of macropinocytosis possibly by regulating MTMR6-mediated dephosphorylation of phosphatidylinositol 3-phosphate in membrane ruffles. Negatively regulates autophagy, in part via its association with MTMR8. Negatively regulates DNA damage-induced apoptosis, in part via its association with MTMR6. Does not bind mono-, di- and tri-phosphorylated phosphatidylinositols, phosphatidic acid and phosphatidylserine. The protein is Myotubularin-related protein 9 (MTMR9) of Bos taurus (Bovine).